The chain runs to 157 residues: MTEKPTYLTREGRARLEAELEYLTTVERKQIAERIAAAKELGDISESGEYEDAKKAQALLEGRIRELKHLLSRAEVIDEDQASNGEVRVGSSVTVRFEDDGTEETWTIVGSAEANPRQGRISNESPLGAALLGKRARNKVTVHTPSGVMKLTILKVR.

Positions 47–75 (SGEYEDAKKAQALLEGRIRELKHLLSRAE) form a coiled coil.

It belongs to the GreA/GreB family.

Necessary for efficient RNA polymerase transcription elongation past template-encoded arresting sites. The arresting sites in DNA have the property of trapping a certain fraction of elongating RNA polymerases that pass through, resulting in locked ternary complexes. Cleavage of the nascent transcript by cleavage factors such as GreA or GreB allows the resumption of elongation from the new 3'terminus. GreA releases sequences of 2 to 3 nucleotides. This chain is Transcription elongation factor GreA, found in Chloroflexus aurantiacus (strain ATCC 29366 / DSM 635 / J-10-fl).